A 488-amino-acid chain; its full sequence is Regulatory protein ViaA (488 aa).

Belongs to the ViaA family. Homodimer. Interacts with RavA.

The protein localises to the cytoplasm. Component of the RavA-ViaA chaperone complex, which may act on the membrane to optimize the function of some of the respiratory chains. ViaA stimulates the ATPase activity of RavA. The protein is Regulatory protein ViaA of Yersinia enterocolitica serotype O:8 / biotype 1B (strain NCTC 13174 / 8081).